Here is a 603-residue protein sequence, read N- to C-terminus: MASERQKKIRNFCIIAHIDHGKSTLADRLLEMTGVLTEREMEDQVLDTMEIERERGITIKAQAVRMVYKAKDGEEYILNLIDTPGHVDFNYEVSRSLAACEGAILVVDAAQGIEAQTLANVYLALDHDLEILPVINKIDLPSAQPDVVKKEIEDVIGLDASEAPLISAKNGINIEAVLESVVKNVPPPEGDENAPLRALIFDSYYDSYKGVIVYIRVKEGTLKLGDKVRMMYTNKEFTVTEIGYMKPGGLVPGTQLSAGEVGYFAASIKNVKDTRVGDTVTTADNPAKEPLPGYKKVNPMVFCGIYPADGSKYGDLRDALEKLQLNDASLTFEPESSVALGFGFRCGFLGLLHMEIIQERLEREFDFDLVTTAPSVIYKVTKTNGETLYIDNPTNLPPPAEIKTMEEPIVKATIMTPTEYVGNIMELAQERRGIYKDMTYIDEGRVMLTYELPLNEIIYDFFDALKSRTKGYASLDYEMLGYRESDLVKLDIMLNGEIVDALSFIVHREKAYARGRRIAEKLKEAIPRQQFEVPIQACIGGKIIARETVKAYRKDVLAKCYGGDITRKKKLLEKQKEGKKRMRQIGTVEVPQEAFMSVLKLDT.

The region spanning 7 to 189 is the tr-type G domain; sequence KKIRNFCIIA…SVVKNVPPPE (183 aa). GTP is bound by residues 19 to 24 and 136 to 139; these read DHGKST and NKID.

This sequence belongs to the TRAFAC class translation factor GTPase superfamily. Classic translation factor GTPase family. LepA subfamily.

It is found in the cell membrane. It carries out the reaction GTP + H2O = GDP + phosphate + H(+). Functionally, required for accurate and efficient protein synthesis under certain stress conditions. May act as a fidelity factor of the translation reaction, by catalyzing a one-codon backward translocation of tRNAs on improperly translocated ribosomes. Back-translocation proceeds from a post-translocation (POST) complex to a pre-translocation (PRE) complex, thus giving elongation factor G a second chance to translocate the tRNAs correctly. Binds to ribosomes in a GTP-dependent manner. The protein is Elongation factor 4 of Acetivibrio thermocellus (strain ATCC 27405 / DSM 1237 / JCM 9322 / NBRC 103400 / NCIMB 10682 / NRRL B-4536 / VPI 7372) (Clostridium thermocellum).